We begin with the raw amino-acid sequence, 515 residues long: uncharacterized protein (515 aa).

3 consecutive transmembrane segments (helical) span residues 1-21 (MSFV…LAGI), 165-185 (IGGP…GLLF), and 199-219 (GPVG…GLFG). A PE domain is found at 1–93 (MSFVVAAPEV…AGAYAGAEAA (93 aa)). Over residues 349-360 (GGTLIGNGGDGG) the composition is skewed to gly residues. Disordered stretches follow at residues 349 to 368 (GGTL…TDGF) and 463 to 515 (GVSG…SPGG).

It belongs to the mycobacterial PE family. PGRS subfamily.

It localises to the cell membrane. This is an uncharacterized protein from Mycobacterium tuberculosis (strain CDC 1551 / Oshkosh).